A 65-amino-acid chain; its full sequence is Large ribosomal subunit protein bL35 (65 aa).

Residues 1–26 form a disordered region; sequence MPKMKTNKSAQKRFKKTGSGRFKCKQ. Basic residues predominate over residues 10-26; sequence AQKRFKKTGSGRFKCKQ.

This sequence belongs to the bacterial ribosomal protein bL35 family.

The polypeptide is Large ribosomal subunit protein bL35 (Hydrogenovibrio crunogenus (strain DSM 25203 / XCL-2) (Thiomicrospira crunogena)).